Consider the following 109-residue polypeptide: MTDLSLDFKKQGGLLPVIVTDFQTGQVLMLAYMNEEAYQKTLDSKEMYYWSRSRNELWHKGDTSGHYQYVKSIKTDCDQDTLLIAVEQVGAACHTGAYSCFFNEIYNPE.

Residue Asp-76 coordinates Mg(2+). Cys-77 contacts Zn(2+). Positions 78 and 80 each coordinate Mg(2+). Zn(2+) is bound by residues Cys-93 and Cys-100.

It belongs to the PRA-CH family. In terms of assembly, homodimer. The cofactor is Mg(2+). Zn(2+) is required as a cofactor.

It localises to the cytoplasm. The catalysed reaction is 1-(5-phospho-beta-D-ribosyl)-5'-AMP + H2O = 1-(5-phospho-beta-D-ribosyl)-5-[(5-phospho-beta-D-ribosylamino)methylideneamino]imidazole-4-carboxamide. Its pathway is amino-acid biosynthesis; L-histidine biosynthesis; L-histidine from 5-phospho-alpha-D-ribose 1-diphosphate: step 3/9. Catalyzes the hydrolysis of the adenine ring of phosphoribosyl-AMP. The polypeptide is Phosphoribosyl-AMP cyclohydrolase (Streptococcus mutans serotype c (strain ATCC 700610 / UA159)).